The primary structure comprises 271 residues: 3-methyl-2-oxobutanoate hydroxymethyltransferase (271 aa).

Mg(2+) is bound by residues Asp51 and Asp90. Residues 51–52, Asp90, and Lys118 contribute to the 3-methyl-2-oxobutanoate site; that span reads DS. Glu120 provides a ligand contact to Mg(2+). Glu186 (proton acceptor) is an active-site residue.

It belongs to the PanB family. As to quaternary structure, homodecamer; pentamer of dimers. The cofactor is Mg(2+).

It is found in the cytoplasm. The enzyme catalyses 3-methyl-2-oxobutanoate + (6R)-5,10-methylene-5,6,7,8-tetrahydrofolate + H2O = 2-dehydropantoate + (6S)-5,6,7,8-tetrahydrofolate. The protein operates within cofactor biosynthesis; (R)-pantothenate biosynthesis; (R)-pantoate from 3-methyl-2-oxobutanoate: step 1/2. In terms of biological role, catalyzes the reversible reaction in which hydroxymethyl group from 5,10-methylenetetrahydrofolate is transferred onto alpha-ketoisovalerate to form ketopantoate. This Xanthomonas campestris pv. campestris (strain 8004) protein is 3-methyl-2-oxobutanoate hydroxymethyltransferase.